We begin with the raw amino-acid sequence, 135 residues long: Small ribosomal subunit protein uS8 (135 aa).

Belongs to the universal ribosomal protein uS8 family. Part of the 30S ribosomal subunit. Contacts proteins S5 and S12.

One of the primary rRNA binding proteins, it binds directly to 16S rRNA central domain where it helps coordinate assembly of the platform of the 30S subunit. The polypeptide is Small ribosomal subunit protein uS8 (Cutibacterium acnes (strain DSM 16379 / KPA171202) (Propionibacterium acnes)).